A 135-amino-acid polypeptide reads, in one-letter code: Peptide methionine sulfoxide reductase MsrB (135 aa).

A MsrB domain is found at 9-131; sequence DDYWRSKLTD…NSASIQFEEE (123 aa). 4 residues coordinate Zn(2+): C48, C51, C97, and C100. Catalysis depends on C120, which acts as the Nucleophile.

The protein belongs to the MsrB Met sulfoxide reductase family. Zn(2+) serves as cofactor.

The catalysed reaction is L-methionyl-[protein] + [thioredoxin]-disulfide + H2O = L-methionyl-(R)-S-oxide-[protein] + [thioredoxin]-dithiol. The chain is Peptide methionine sulfoxide reductase MsrB from Teredinibacter turnerae (strain ATCC 39867 / T7901).